The sequence spans 507 residues: Heat shock 70 kDa protein 14-B (507 aa).

This sequence belongs to the heat shock protein 70 family. Component of ribosome-associated complex (RAC).

It localises to the cytoplasm. The protein resides in the cytosol. In terms of biological role, component of the ribosome-associated complex (RAC), a complex involved in folding or maintaining nascent polypeptides in a folding-competent state. This Xenopus laevis (African clawed frog) protein is Heat shock 70 kDa protein 14-B (hspa14-b).